Reading from the N-terminus, the 297-residue chain is Alarmin release inhibitor (297 aa).

N-linked (GlcNAc...) asparagine glycosylation is found at Asn107, Asn175, and Asn190. One can recognise a Sushi domain in the interval 151-211 (TYDPTPNTPT…WVPTLGVCPK (61 aa)). An intrachain disulfide couples Cys183 to Cys209.

Interacts with mouse IL33 (in reduced form).

The protein localises to the secreted. The protein resides in the host nucleus. Functionally, secreted protein which suppresses the host allergic response by inhibiting the interaction of host IL33 with its receptor in order to maintain parasitic infection. Binds to both host IL33 and host nuclear DNA and this dual binding blocks the interaction of IL33 with its receptor, and tethers IL33 within necrotic cells, preventing its release, and blocking allergic response initiation. The polypeptide is Alarmin release inhibitor (Heligmosomoides polygyrus (Parasitic roundworm)).